The chain runs to 467 residues: Siroheme synthase (467 aa).

Residues 1–203 (METLPIFMKL…GQEEAARHAM (203 aa)) form a precorrin-2 dehydrogenase /sirohydrochlorin ferrochelatase region. Residues 22–23 (EI) and 43–44 (PE) contribute to the NAD(+) site. At serine 128 the chain carries Phosphoserine. The interval 216–467 (GEVYLVGGGP…APSPEVVSAG (252 aa)) is uroporphyrinogen-III C-methyltransferase. Proline 225 provides a ligand contact to S-adenosyl-L-methionine. The Proton acceptor role is filled by aspartate 248. Lysine 270 (proton donor) is an active-site residue. S-adenosyl-L-methionine-binding positions include 301-303 (GGD), isoleucine 306, 331-332 (TA), methionine 383, and glycine 412.

This sequence in the N-terminal section; belongs to the precorrin-2 dehydrogenase / sirohydrochlorin ferrochelatase family. The protein in the C-terminal section; belongs to the precorrin methyltransferase family.

It carries out the reaction uroporphyrinogen III + 2 S-adenosyl-L-methionine = precorrin-2 + 2 S-adenosyl-L-homocysteine + H(+). It catalyses the reaction precorrin-2 + NAD(+) = sirohydrochlorin + NADH + 2 H(+). The enzyme catalyses siroheme + 2 H(+) = sirohydrochlorin + Fe(2+). It functions in the pathway cofactor biosynthesis; adenosylcobalamin biosynthesis; precorrin-2 from uroporphyrinogen III: step 1/1. The protein operates within cofactor biosynthesis; adenosylcobalamin biosynthesis; sirohydrochlorin from precorrin-2: step 1/1. It participates in porphyrin-containing compound metabolism; siroheme biosynthesis; precorrin-2 from uroporphyrinogen III: step 1/1. Its pathway is porphyrin-containing compound metabolism; siroheme biosynthesis; siroheme from sirohydrochlorin: step 1/1. It functions in the pathway porphyrin-containing compound metabolism; siroheme biosynthesis; sirohydrochlorin from precorrin-2: step 1/1. Functionally, multifunctional enzyme that catalyzes the SAM-dependent methylations of uroporphyrinogen III at position C-2 and C-7 to form precorrin-2 via precorrin-1. Then it catalyzes the NAD-dependent ring dehydrogenation of precorrin-2 to yield sirohydrochlorin. Finally, it catalyzes the ferrochelation of sirohydrochlorin to yield siroheme. This chain is Siroheme synthase, found in Methylobacillus flagellatus (strain ATCC 51484 / DSM 6875 / VKM B-1610 / KT).